A 415-amino-acid polypeptide reads, in one-letter code: Calcium/calmodulin-dependent serine/threonine-protein kinase (415 aa).

A Protein kinase domain is found at 12-308 (YEISEILGRG…AQELLDHPWV (297 aa)). Residues 18–26 (LGRGGFSVV) and lysine 46 contribute to the ATP site. Catalysis depends on aspartate 173, which acts as the Proton acceptor. The calmodulin-binding stretch occupies residues 318–328 (MDAEIVSRLQS).

This sequence belongs to the protein kinase superfamily. CAMK Ser/Thr protein kinase family. CaMK subfamily.

The catalysed reaction is L-seryl-[protein] + ATP = O-phospho-L-seryl-[protein] + ADP + H(+). It carries out the reaction L-threonyl-[protein] + ATP = O-phospho-L-threonyl-[protein] + ADP + H(+). In terms of biological role, may be involved in signal transduction processes. In Malus domestica (Apple), this protein is Calcium/calmodulin-dependent serine/threonine-protein kinase.